A 140-amino-acid chain; its full sequence is MAIHYETKATNVGGRKGHVYTDDRALDIDIVSPAQADGKATNPEQLFAAGYASCFNGAFDLILKQNKVRDAHPEVTLTVRLEDDSDSESPKLSVSIDATIKNVISQEEAEKYLQMAHEFCPYSKATQGNINVDLNVNVVD.

It belongs to the OsmC/Ohr family.

The protein is Organic hydroperoxide resistance protein-like of Staphylococcus aureus (strain MSSA476).